A 415-amino-acid polypeptide reads, in one-letter code: Adipocyte plasma membrane-associated protein (415 aa).

Positions methionine 1 to glycine 30 are disordered. The Cytoplasmic portion of the chain corresponds to methionine 1–arginine 39. A helical transmembrane segment spans residues valine 40–leucine 60. At aspartate 61–leucine 412 the chain is on the extracellular side. Asparagine 159 is a glycosylation site (N-linked (GlcNAc...) asparagine).

Belongs to the strictosidine synthase family.

It is found in the membrane. In Gallus gallus (Chicken), this protein is Adipocyte plasma membrane-associated protein (APMAP).